The sequence spans 215 residues: Keratin-associated protein 26-1 (215 aa).

This sequence belongs to the PMG family. In terms of assembly, interacts with hair keratins.

Functionally, in the hair cortex, hair keratin intermediate filaments are embedded in an interfilamentous matrix, consisting of hair keratin-associated proteins (KRTAP), which are essential for the formation of a rigid and resistant hair shaft through their extensive disulfide bond cross-linking with abundant cysteine residues of hair keratins. The matrix proteins include the high-sulfur and high-glycine-tyrosine keratins. In Mus musculus (Mouse), this protein is Keratin-associated protein 26-1.